A 464-amino-acid chain; its full sequence is F-box/WD repeat-containing protein 12 (464 aa).

One can recognise an F-box domain in the interval 1 to 45 (MEIRLPDLALKRIFSFLDLFGLLQVSQVNKHWNRIADSDYLWRSL). WD repeat units lie at residues 89-132 (YKVT…CAWD), 136-174 (GTMI…KVWN), 178-217 (RDAL…YTFT), 222-263 (RDVS…FLTE), 270-315 (EGSV…ITFD), 320-367 (KTGG…LLFS), 370-407 (GFLL…YMWE), and 416-461 (RSCC…VMYS).

Interacts with SKP1. Interacts with CUL1. Interacts with IL22RA1. As to expression, ubiquitously expressed.

Its pathway is protein modification; protein ubiquitination. Functionally, substrate-recognition component of the SCF (SKP1-CUL1-F-box protein)-type E3 ubiquitin ligase complex. Promotes degradation of interleukin-22 receptor subunit IL22RA1 in resting and IL22-stimulated conditions by facilitating its ubiquitination. Functions as a cell growth suppressor. This chain is F-box/WD repeat-containing protein 12 (FBXW12), found in Homo sapiens (Human).